Here is a 268-residue protein sequence, read N- to C-terminus: Hydroxyethylthiazole kinase (268 aa).

Residue Met-44 coordinates substrate. Positions 119 and 165 each coordinate ATP. Substrate is bound at residue Gly-192.

Belongs to the Thz kinase family. The cofactor is Mg(2+).

It carries out the reaction 5-(2-hydroxyethyl)-4-methylthiazole + ATP = 4-methyl-5-(2-phosphooxyethyl)-thiazole + ADP + H(+). The protein operates within cofactor biosynthesis; thiamine diphosphate biosynthesis; 4-methyl-5-(2-phosphoethyl)-thiazole from 5-(2-hydroxyethyl)-4-methylthiazole: step 1/1. Its function is as follows. Catalyzes the phosphorylation of the hydroxyl group of 4-methyl-5-beta-hydroxyethylthiazole (THZ). The sequence is that of Hydroxyethylthiazole kinase from Corynebacterium glutamicum (strain R).